We begin with the raw amino-acid sequence, 391 residues long: tRNA-specific 2-thiouridylase MnmA (391 aa).

Residues Gly35–Ser42 and Leu61 contribute to the ATP site. The Nucleophile role is filled by Cys122. The cysteines at positions 122 and 221 are disulfide-linked. Gly147 is a binding site for ATP. Positions Lys171–Gln173 are interaction with tRNA. Cys221 functions as the Cysteine persulfide intermediate in the catalytic mechanism. Positions Arg328 to Tyr329 are interaction with tRNA.

This sequence belongs to the MnmA/TRMU family.

It localises to the cytoplasm. The catalysed reaction is S-sulfanyl-L-cysteinyl-[protein] + uridine(34) in tRNA + AH2 + ATP = 2-thiouridine(34) in tRNA + L-cysteinyl-[protein] + A + AMP + diphosphate + H(+). In terms of biological role, catalyzes the 2-thiolation of uridine at the wobble position (U34) of tRNA, leading to the formation of s(2)U34. The protein is tRNA-specific 2-thiouridylase MnmA of Synechococcus sp. (strain CC9311).